Reading from the N-terminus, the 998-residue chain is Methyl sulfide methyltransferase-associated sensor (998 aa).

Residues 40–77 (FGYSPKDFISGGLGYADIIYPADLEIAVSQFFSYVEKD) enclose the PAS 1 domain. One can recognise a PAC 1 domain in the interval 117 to 169 (FTQQYRLLNKSGDVLWVEAEIKVLEEEEGKAGLFQVTVFDISRWKHTEKAMPA). A PAS 2 domain is found at 209 to 246 (LGYTPEDFTSGRIVYTDIIHPDDLDNVRAEVSKNTEEG). Positions 250-302 (FSKEYRVLAKSGEVRYVDERTLIRRNEKGEITCYQGILLDITQRKEAEELILS) constitute a PAC 2 domain. Positions 314–458 (ASLDEVLLLL…NAYLAGIAIE (145 aa)) constitute a GAF 1 domain. A PAS 3 domain is found at 469 to 540 (SENRFRTIFD…ENMQKIKAEG (72 aa)). The 144-residue stretch at 609-752 (ASLKEITDFA…LMQGMWQLIQ (144 aa)) folds into the GAF 2 domain. Cysteine 656 is a heme binding site. Residues 783 to 998 (EFVEEMMFPE…GNLMHVKLPK (216 aa)) enclose the Histidine kinase domain.

It depends on heme as a cofactor. Autophosphorylates: autophosphorylation is dependent on the redox state of heme cofactor and is promoted upon reduction.

The protein localises to the cytoplasm. The enzyme catalyses ATP + protein L-histidine = ADP + protein N-phospho-L-histidine.. Heme-binding sensor kinase component part of a two-component regulatory system involved in methyl sulfide metabolism. Does not act as a phytochrome-like photoreceptor. The polypeptide is Methyl sulfide methyltransferase-associated sensor (msmS) (Methanosarcina acetivorans (strain ATCC 35395 / DSM 2834 / JCM 12185 / C2A)).